Reading from the N-terminus, the 513-residue chain is ATP synthase subunit alpha (513 aa).

169–176 (GDRQTGKT) provides a ligand contact to ATP.

This sequence belongs to the ATPase alpha/beta chains family. F-type ATPases have 2 components, CF(1) - the catalytic core - and CF(0) - the membrane proton channel. CF(1) has five subunits: alpha(3), beta(3), gamma(1), delta(1), epsilon(1). CF(0) has three main subunits: a(1), b(2) and c(9-12). The alpha and beta chains form an alternating ring which encloses part of the gamma chain. CF(1) is attached to CF(0) by a central stalk formed by the gamma and epsilon chains, while a peripheral stalk is formed by the delta and b chains.

It localises to the cell inner membrane. The catalysed reaction is ATP + H2O + 4 H(+)(in) = ADP + phosphate + 5 H(+)(out). Functionally, produces ATP from ADP in the presence of a proton gradient across the membrane. The alpha chain is a regulatory subunit. This chain is ATP synthase subunit alpha, found in Hydrogenovibrio crunogenus (strain DSM 25203 / XCL-2) (Thiomicrospira crunogena).